The sequence spans 178 residues: Probable chorismate pyruvate-lyase (178 aa).

Residues Arg-73, Leu-111, and Glu-163 each contribute to the substrate site.

The protein belongs to the UbiC family.

It is found in the cytoplasm. It carries out the reaction chorismate = 4-hydroxybenzoate + pyruvate. Its pathway is cofactor biosynthesis; ubiquinone biosynthesis. Functionally, removes the pyruvyl group from chorismate, with concomitant aromatization of the ring, to provide 4-hydroxybenzoate (4HB) for the ubiquinone pathway. The chain is Probable chorismate pyruvate-lyase from Pseudomonas aeruginosa (strain UCBPP-PA14).